Here is a 226-residue protein sequence, read N- to C-terminus: Leucyl/phenylalanyl-tRNA--protein transferase (226 aa).

Belongs to the L/F-transferase family.

The protein resides in the cytoplasm. It catalyses the reaction N-terminal L-lysyl-[protein] + L-leucyl-tRNA(Leu) = N-terminal L-leucyl-L-lysyl-[protein] + tRNA(Leu) + H(+). The enzyme catalyses N-terminal L-arginyl-[protein] + L-leucyl-tRNA(Leu) = N-terminal L-leucyl-L-arginyl-[protein] + tRNA(Leu) + H(+). It carries out the reaction L-phenylalanyl-tRNA(Phe) + an N-terminal L-alpha-aminoacyl-[protein] = an N-terminal L-phenylalanyl-L-alpha-aminoacyl-[protein] + tRNA(Phe). Functionally, functions in the N-end rule pathway of protein degradation where it conjugates Leu, Phe and, less efficiently, Met from aminoacyl-tRNAs to the N-termini of proteins containing an N-terminal arginine or lysine. This chain is Leucyl/phenylalanyl-tRNA--protein transferase, found in Bradyrhizobium diazoefficiens (strain JCM 10833 / BCRC 13528 / IAM 13628 / NBRC 14792 / USDA 110).